We begin with the raw amino-acid sequence, 417 residues long: Cobalamin binding intrinsic factor (417 aa).

The N-terminal stretch at 1-18 (MAWLTLYLLSVLWAVAGT) is a signal peptide. Cystine bridges form between C26/C246, C103/C288, and C143/C182. D171 is a binding site for cob(II)alamin. S191 is modified (phosphoserine). D222 and Q270 together coordinate cob(II)alamin. N311 and N330 each carry an N-linked (GlcNAc...) asparagine glycan. Cob(II)alamin contacts are provided by residues 365 to 370 (SWGLIV) and 386 to 395 (WEFLSGKTPL). An N-linked (GlcNAc...) asparagine glycan is attached at N413.

It belongs to the eukaryotic cobalamin transport proteins family. As to quaternary structure, interacts with CUBN (via CUB domains). In terms of tissue distribution, gastric mucosa.

The protein resides in the secreted. Its function is as follows. Promotes absorption of the essential vitamin cobalamin (Cbl) in the ileum. After interaction with CUBN, the CBLIF-cobalamin complex is internalized via receptor-mediated endocytosis. This Mus musculus (Mouse) protein is Cobalamin binding intrinsic factor (Cblif).